Here is a 362-residue protein sequence, read N- to C-terminus: Heme A synthase (362 aa).

The next 5 membrane-spanning stretches (helical) occupy residues 11–31 (AAIRIWLSIVAGLIALMVLVG), 102–122 (VIGMVYLLPFLWFLWRGAVSG), 128–148 (LWLIFGLGALQGAVGWWMVAS), 159–179 (VRLATHLSLALLIFASIVWTL), and 198–218 (AWALVGVTFVQLYLGALVAGL). H262 provides a ligand contact to heme. A run of 3 helical transmembrane segments spans residues 264–286 (MTAYTLLALAAWHAFDVMRAGAG), 297–317 (LAAILVQAVLGIATLLMVVPI), and 318–338 (SLALLHQGTALIVLTFAVLQA). Residue H323 participates in heme binding.

Belongs to the COX15/CtaA family. Type 2 subfamily. Interacts with CtaB. Requires heme b as cofactor.

It localises to the cell membrane. It carries out the reaction Fe(II)-heme o + 2 A + H2O = Fe(II)-heme a + 2 AH2. It participates in porphyrin-containing compound metabolism; heme A biosynthesis; heme A from heme O: step 1/1. Its function is as follows. Catalyzes the conversion of heme O to heme A by two successive hydroxylations of the methyl group at C8. The first hydroxylation forms heme I, the second hydroxylation results in an unstable dihydroxymethyl group, which spontaneously dehydrates, resulting in the formyl group of heme A. The polypeptide is Heme A synthase (Bradyrhizobium sp. (strain ORS 278)).